A 135-amino-acid polypeptide reads, in one-letter code: Transcription antitermination protein NusB (135 aa).

It belongs to the NusB family.

Functionally, involved in transcription antitermination. Required for transcription of ribosomal RNA (rRNA) genes. Binds specifically to the boxA antiterminator sequence of the ribosomal RNA (rrn) operons. The chain is Transcription antitermination protein NusB from Clostridium perfringens (strain ATCC 13124 / DSM 756 / JCM 1290 / NCIMB 6125 / NCTC 8237 / Type A).